We begin with the raw amino-acid sequence, 490 residues long: Sporulation-specific protein 1 (490 aa).

The Protein kinase domain occupies 18 to 272 (YSIQSCIGRG…AYNLLSFEFV (255 aa)). Residues 24-32 (IGRGNFGDV) and Lys-47 each bind ATP. Asp-141 functions as the Proton acceptor in the catalytic mechanism.

This sequence belongs to the protein kinase superfamily. STE Ser/Thr protein kinase family. STE20 subfamily.

It localises to the nucleus. The protein localises to the cytoplasm. It carries out the reaction L-seryl-[protein] + ATP = O-phospho-L-seryl-[protein] + ADP + H(+). The enzyme catalyses L-threonyl-[protein] + ATP = O-phospho-L-threonyl-[protein] + ADP + H(+). Serine/threonine protein kinase required for spore wall development. This is Sporulation-specific protein 1 (SPS1) from Saccharomyces cerevisiae (strain ATCC 204508 / S288c) (Baker's yeast).